The primary structure comprises 206 residues: Sclerostin domain-containing protein 1 (206 aa).

The first 23 residues, 1 to 23, serve as a signal peptide directing secretion; it reads MLPPAIHFYLLPLACILMKSCLA. Asn47 is a glycosylation site (N-linked (GlcNAc...) asparagine). Intrachain disulfides connect Cys75-Cys133, Cys89-Cys147, Cys100-Cys163, and Cys104-Cys165. One can recognise a CTCK domain in the interval 75–170; that stretch reads CRELRSTKYI…TACKCKRYTR (96 aa). Asn173 carries N-linked (GlcNAc...) asparagine glycosylation. Positions 174 to 206 are disordered; that stretch reads ESSHNFESMSPAKPVQHHRERKRASKSSKHSMS. Over residues 188–206 the composition is skewed to basic residues; it reads VQHHRERKRASKSSKHSMS.

Belongs to the sclerostin family. As to quaternary structure, interacts with BMP2, BMP4, BMP6 and BMP7 with high affinity. Highly expressed in kidney and weakly in lung.

Its subcellular location is the secreted. Functionally, may be involved in the onset of endometrial receptivity for implantation/sensitization for the decidual cell reaction Enhances Wnt signaling and inhibits TGF-beta signaling. Directly antagonizes activity of BMP2, BMP4, BMP6 and BMP7 in a dose-dependent manner. This chain is Sclerostin domain-containing protein 1 (SOSTDC1), found in Homo sapiens (Human).